The sequence spans 410 residues: E3 SUMO-protein ligase EGR2 (410 aa).

The segment covering 68 to 83 (PPASTTASSSVTSASP) has biased composition (low complexity). Disordered regions lie at residues 68 to 95 (PPAS…GVCT), 101 to 120 (PELD…SGCT), and 127 to 151 (PSAF…SYPS). The short motif at 104-107 (DHLY) is the HCFC1-binding-motif (HBM) element. Low complexity predominate over residues 127–143 (PSAFLSPPTTSTSSLAY). K188 is modified (N6-acetyllysine). The segment at 217 to 286 (PSAGVTGPGA…PYPCPAEGCD (70 aa)) is disordered. Gly residues predominate over residues 222-231 (TGPGASGGSE). Positions 237–248 (GSGSAAVTTSPY) are enriched in polar residues. C2H2-type zinc fingers lie at residues 278 to 302 (YPCP…IRIH), 308 to 330 (FQCR…IRTH), and 336 to 358 (FACD…TKIH). Positions 349-410 (DERKRHTKIH…LACTSRTRTP (62 aa)) are disordered. Positions 353 to 363 (RHTKIHLRQKE) are enriched in basic residues. Over residues 367-380 (SAPSSSASAQPSAS) the composition is skewed to low complexity.

This sequence belongs to the EGR C2H2-type zinc-finger protein family. As to quaternary structure, interacts with HCFC1. Interacts with WWP2. Interacts with UBC9. Interacts with CITED1. Interacts (via phosphorylated form) with SFN. Post-translationally, ubiquitinated by WWP2 leading to proteasomal degradation. In terms of processing, acetylated. May be deacetylated by HDAC6, HDAC10 or SIRT1.

The protein localises to the nucleus. The protein operates within protein modification; protein sumoylation. Its function is as follows. Sequence-specific DNA-binding transcription factor. Plays a role in hindbrain segmentation by regulating the expression of a subset of homeobox containing genes and in Schwann cell myelination by regulating the expression of genes involved in the formation and maintenance of myelin. Binds to two EGR2-consensus sites EGR2A (5'-CTGTAGGAG-3') and EGR2B (5'-ATGTAGGTG-3') in the HOXB3 enhancer and promotes HOXB3 transcriptional activation. Binds to specific DNA sites located in the promoter region of HOXA4, HOXB2 and ERBB2. Regulates hindbrain segmentation by controlling the expression of Hox genes, such as HOXA4, HOXB3 and HOXB2, and thereby specifying odd and even rhombomeres. Promotes the expression of HOXB3 in the rhombomere r5 in the hindbrain. Regulates myelination in the peripheral nervous system after birth, possibly by regulating the expression of myelin proteins, such as MPZ, and by promoting the differentiation of Schwann cells. Involved in the development of the jaw openener musculature, probably by playing a role in its innervation through trigeminal motor neurons. May play a role in adipogenesis, possibly by regulating the expression of CEBPB. In terms of biological role, E3 SUMO-protein ligase helping SUMO1 conjugation to its coregulators NAB1 and NAB2, whose sumoylation down-regulates EGR2 transcriptional activity. The polypeptide is E3 SUMO-protein ligase EGR2 (EGR2) (Cricetulus griseus (Chinese hamster)).